The sequence spans 387 residues: 1,3-propanediol dehydrogenase (387 aa).

Belongs to the iron-containing alcohol dehydrogenase family. Homooctamer. The cofactor is Fe cation.

It catalyses the reaction propane-1,3-diol + NAD(+) = 3-hydroxypropanal + NADH + H(+). This Klebsiella pneumoniae protein is 1,3-propanediol dehydrogenase (dhaT).